The following is a 214-amino-acid chain: Pyridoxine/pyridoxamine 5'-phosphate oxidase (214 aa).

Residues 8 to 11 (RINY) and K66 each bind substrate. Residues 61-66 (RILLIK), 76-77 (FT), R82, K83, and Q105 each bind FMN. Residues Y123, R127, and S131 each contribute to the substrate site. FMN is bound by residues 140–141 (QS) and W184. 190-192 (RLH) lines the substrate pocket. Residue R194 coordinates FMN.

Belongs to the pyridoxamine 5'-phosphate oxidase family. Homodimer. FMN serves as cofactor.

The catalysed reaction is pyridoxamine 5'-phosphate + O2 + H2O = pyridoxal 5'-phosphate + H2O2 + NH4(+). The enzyme catalyses pyridoxine 5'-phosphate + O2 = pyridoxal 5'-phosphate + H2O2. It participates in cofactor metabolism; pyridoxal 5'-phosphate salvage; pyridoxal 5'-phosphate from pyridoxamine 5'-phosphate: step 1/1. The protein operates within cofactor metabolism; pyridoxal 5'-phosphate salvage; pyridoxal 5'-phosphate from pyridoxine 5'-phosphate: step 1/1. Its function is as follows. Catalyzes the oxidation of either pyridoxine 5'-phosphate (PNP) or pyridoxamine 5'-phosphate (PMP) into pyridoxal 5'-phosphate (PLP). The polypeptide is Pyridoxine/pyridoxamine 5'-phosphate oxidase (Burkholderia vietnamiensis (strain G4 / LMG 22486) (Burkholderia cepacia (strain R1808))).